Here is a 219-residue protein sequence, read N- to C-terminus: Dynein light chain Tctex-type 4 (219 aa).

Residues 1–84 (MACRTLPSRR…RRPSLGPVPP (84 aa)) form a disordered region. Basic and acidic residues predominate over residues 9–20 (RRQEEETTKDLA). S64 carries the post-translational modification Phosphoserine.

Belongs to the dynein light chain Tctex-type family. In terms of assembly, interacts with ENG/endoglin, TGFBR2 and TGFBR3. Interacts with PPP1CC.

The protein localises to the cell projection. It localises to the cilium. Its subcellular location is the flagellum. It is found in the cytoplasmic vesicle. The protein resides in the secretory vesicle. The protein localises to the acrosome. It localises to the cytoplasm. Its subcellular location is the cytoskeleton. It is found in the cilium axoneme. The protein resides in the nucleus. The protein localises to the microtubule organizing center. The sequence is that of Dynein light chain Tctex-type 4 (Dynlt4) from Mus musculus (Mouse).